The sequence spans 547 residues: Methionine--tRNA ligase (547 aa).

A 'HIGH' region motif is present at residues 15–25 (PYANGSIHIGH). Zn(2+) contacts are provided by Cys-146, Cys-149, Cys-159, and Cys-162. Positions 332–336 (KLSKS) match the 'KMSKS' region motif. Residue Lys-335 participates in ATP binding.

It belongs to the class-I aminoacyl-tRNA synthetase family. MetG type 1 subfamily. Monomer. It depends on Zn(2+) as a cofactor.

Its subcellular location is the cytoplasm. It carries out the reaction tRNA(Met) + L-methionine + ATP = L-methionyl-tRNA(Met) + AMP + diphosphate. Is required not only for elongation of protein synthesis but also for the initiation of all mRNA translation through initiator tRNA(fMet) aminoacylation. The chain is Methionine--tRNA ligase (metG) from Buchnera aphidicola subsp. Acyrthosiphon pisum (strain APS) (Acyrthosiphon pisum symbiotic bacterium).